The following is a 445-amino-acid chain: MKAYDFTQGNVLKQLVLFSMPIMLGNALQVSFQFIDSLWIGNLLGAKALGAAAVSSTIVLTVLSFILGLNNATLTILSQQKGKDDIKGMASYINAFVVLLTGLSIGFGAAGFFLSELLLRLLKTPESMIPLAETYLQIQFIGILFLFGYNFISTVLRALGDSKTPLRFIAFAVVLNTVLAPLFISVFRMGIAGAAYSTILSQGIAFLYGLFYVIKHKLVPFSIPRMPKWEESALILKLGIPAGLQMMVITGGMMAIMSVVNSYGDHVVSGFGAVQRLDSIITLPAMAAGTAVNSMAGQNIGIGNEKRVGTIARLGVIAVISCMLVIAVMIWVFGKYLIRLFISEPDAVAFGEQYLKWIAFFYPFIGVNFVLNGIVRAAGAMLQVLVLNLISFWVLRYPFTALFSAWLGQKGIGLGIGMSFLFSSCAAFLYYRYGRWKAMKLFTEK.

12 helical membrane-spanning segments follow: residues 15-35 (LVLFSMPIMLGNALQVSFQFI), 49-69 (LGAAAVSSTIVLTVLSFILGL), 95-115 (AFVVLLTGLSIGFGAAGFFLS), 136-156 (LQIQFIGILFLFGYNFISTVL), 168-188 (FIAFAVVLNTVLAPLFISVFR), 194-214 (AAYSTILSQGIAFLYGLFYVI), 240-260 (IPAGLQMMVITGGMMAIMSVV), 277-297 (LDSIITLPAMAAGTAVNSMAG), 314-334 (LGVIAVISCMLVIAVMIWVFG), 355-375 (LKWIAFFYPFIGVNFVLNGIV), 384-404 (VLVLNLISFWVLRYPFTALFS), and 411-431 (GIGLGIGMSFLFSSCAAFLYY).

This sequence belongs to the multi antimicrobial extrusion (MATE) (TC 2.A.66.1) family.

It localises to the cell membrane. This Bacillus subtilis (strain 168) protein is Probable multidrug resistance protein YpnP (ypnP).